We begin with the raw amino-acid sequence, 687 residues long: MELFTVNRYTEDLKEQKDGAQGTNNEDEILQKLLKKAAKRKRKHEAIEVVETPILEKETSDVKESESKEEQVEEPEKPLEVVQEEDVPSNEFQVLGGDDSAAKKKKVQMQLPNWLAHPTIIEGGSLQPEEEVPASEAIDQLDYLEKYTCQALKQMKIKRLFPVQKQVIPWILEAHAKPPPFRPRDICVSAPTGSGKTLAFAIPIVQLLSQRVDCKVRALVVLPVAELALQVYRVISELCSKTELEVCLLSKQHKLEDEQEKLVEQYKGKYYSKADIVVTTPGRLVDHLHATKGFCLKSLKFLVIDEADRIMDAVFQNWLYHLDSHVKETTDQLLAGTQAPLCYAELQASFGKQPHKLLFSATLSQDPEKLQDLRLFQPRLFATVLTMPVLKDATEEGADTEALTDPGQFVGRYTTPAELTEQYCVTELRLKPLTVFALVEKYKWKRFLCFTNSSDQATRLTFVLKVLFQKYSTKVSELSGNLSAKVRNERLRDFAAGKINGLICSDALARGIDVADVDVVLSYETPRHITTYIHRVGRTARAGRKGTAVTVLTEQDMTLFKKILSDANKGLGEEIHVSPDIEIQHAVEYKEALAGLRSEKVKNKNQKMAEKNRVATKALIHKKQEETATVRPLTLMEKLQIKANEIVQSSKKSSETKNSKTKADKTKYQPKETKKQIIAKQLKAIEN.

2 disordered regions span residues 1 to 26 (MELF…TNNE) and 52 to 87 (TPIL…EEDV). 2 stretches are compositionally biased toward basic and acidic residues: residues 9 to 18 (YTEDLKEQKD) and 54 to 79 (ILEK…EKPL). The Q motif motif lies at 160–168 (LFPVQKQVI). The 205-residue stretch at 177–381 (KPPPFRPRDI…DLRLFQPRLF (205 aa)) folds into the Helicase ATP-binding domain. 190-197 (APTGSGKT) is an ATP binding site. Positions 305 to 308 (DEAD) match the DEAD box motif. One can recognise a Helicase C-terminal domain in the interval 434–583 (TVFALVEKYK…EIHVSPDIEI (150 aa)). A disordered region spans residues 646–675 (IVQSSKKSSETKNSKTKADKTKYQPKETKK). A compositionally biased stretch (basic and acidic residues) spans 652 to 675 (KSSETKNSKTKADKTKYQPKETKK).

It belongs to the DEAD box helicase family. DDX51/DBP6 subfamily. Expressed in the germline tissue of the ovary.

The protein resides in the nucleus. It is found in the nucleolus. The enzyme catalyses ATP + H2O = ADP + phosphate + H(+). Functionally, ATP-binding RNA helicase involved in the biogenesis of 60S ribosomal subunits. This is Probable ATP-dependent RNA helicase Dbp73D (Dbp73D) from Drosophila melanogaster (Fruit fly).